A 280-amino-acid chain; its full sequence is Shikimate dehydrogenase (NADP(+)) (280 aa).

Shikimate-binding positions include 15 to 17 (SLS) and threonine 62. Lysine 66 (proton acceptor) is an active-site residue. 2 residues coordinate shikimate: asparagine 88 and aspartate 104. NADP(+) is bound by residues 128–132 (GAGGA), 151–156 (NRTEGR), and isoleucine 222. Tyrosine 224 is a binding site for shikimate. Glycine 245 lines the NADP(+) pocket.

This sequence belongs to the shikimate dehydrogenase family. In terms of assembly, homodimer.

The enzyme catalyses shikimate + NADP(+) = 3-dehydroshikimate + NADPH + H(+). Its pathway is metabolic intermediate biosynthesis; chorismate biosynthesis; chorismate from D-erythrose 4-phosphate and phosphoenolpyruvate: step 4/7. In terms of biological role, involved in the biosynthesis of the chorismate, which leads to the biosynthesis of aromatic amino acids. Catalyzes the reversible NADPH linked reduction of 3-dehydroshikimate (DHSA) to yield shikimate (SA). The protein is Shikimate dehydrogenase (NADP(+)) of Methanosarcina barkeri (strain Fusaro / DSM 804).